The following is a 209-amino-acid chain: Guanylate kinase (209 aa).

The 180-residue stretch at 5–184 folds into the Guanylate kinase-like domain; the sequence is GLLIVFSGPS…AAERVKRVIE (180 aa). Residue 12–19 coordinates ATP; it reads GPSGVGKG.

The protein belongs to the guanylate kinase family.

It is found in the cytoplasm. It carries out the reaction GMP + ATP = GDP + ADP. Functionally, essential for recycling GMP and indirectly, cGMP. This chain is Guanylate kinase, found in Streptococcus thermophilus (strain CNRZ 1066).